The sequence spans 407 residues: MEAALKKLNIALQEAIDSFEGPLNQERLNELQTTESLPNKEVWSLASQTIDLADKIIHRLQPPSLQLAESFLAYLDTKCLWAAVSHDIPDLITAGGPQTVQELAKKSGLQSIRLKQVMRVLHNNGIFEYKPTTQKYSNTPSSTLLAKDHWTQWHLWVDLYGNEHYKAAEGIPDAIREGQTRCAAQIQYDTDESMFRYFARNGLQEKFHKTLGAGAVAQAPGMMADYNWGELDDAVVLDIGGGGGDFITSLLREHPSMRGGLFELDSVIEMVRPKYRDASGEFADVGDRMVDLHVGDFRVEVPAYEVYTMKWCLHNWLDEDVVKILSAVRRAIKVTPRARMVVVESVLKDGRSSRIWRFGDLTMMAGANGQEREEEDWRGLAAKTGWNIHSISPLRNAWAAAIDLRPC.

Residues glutamate 263 and 295-297 (GDF) contribute to the S-adenosyl-L-methionine site. Catalysis depends on histidine 314, which acts as the Proton acceptor.

The protein belongs to the class I-like SAM-binding methyltransferase superfamily. Cation-independent O-methyltransferase family.

It participates in mycotoxin biosynthesis. Functionally, O-methyltransferase; part of the gene cluster that mediates the biosynthesis of 11'-deoxyverticillin A, one of the dimeric epipolythiodioxopiperazines (ETPs) from the verticillin family that act as mycotoxins. 11'-deoxyverticillin A is required for normal conidiation. The nonribosomal peptide synthetase verP is speculated to be responsible for condensation of amino acids to form the carbon skeleton of verticillin, whereas the cluster-specific tailoring enzymes are involved in further modifications leading to the production of 11'-deoxyverticillin A. This chain is O-methyltransferase verK, found in Clonostachys rogersoniana.